A 127-amino-acid polypeptide reads, in one-letter code: Anti-adapter protein IraD (127 aa).

The protein belongs to the GpW/Gp25 family. IraD subfamily. Interacts with RssB.

The protein resides in the cytoplasm. Its function is as follows. Inhibits RpoS proteolysis by regulating RssB activity, thereby increasing the stability of the sigma stress factor RpoS during oxidative stress. Its effect on RpoS stability is due to its interaction with RssB, which probably blocks the interaction of RssB with RpoS, and the consequent delivery of the RssB-RpoS complex to the ClpXP protein degradation pathway. The chain is Anti-adapter protein IraD from Escherichia coli (strain SMS-3-5 / SECEC).